Consider the following 82-residue polypeptide: Large ribosomal subunit protein bL31B (82 aa).

The protein belongs to the bacterial ribosomal protein bL31 family. Type B subfamily. As to quaternary structure, part of the 50S ribosomal subunit.

The chain is Large ribosomal subunit protein bL31B from Pectobacterium atrosepticum (strain SCRI 1043 / ATCC BAA-672) (Erwinia carotovora subsp. atroseptica).